Consider the following 183-residue polypeptide: CASP-like protein UU2 (183 aa).

Residues 1–33 lie on the Cytoplasmic side of the membrane; the sequence is MEESQQQSSKFDAPPSPYVPSRVYLAQIYWKKP. A helical transmembrane segment spans residues 34–54; sequence AIVVLRVLQFIFSLIAFSVMA. Residues 55–72 lie on the Extracellular side of the membrane; it reads DVLHDVQGSIKSLSYTVA. The chain crosses the membrane as a helical span at residues 73–93; it reads IGVLACAYALAQLSFSLWCVI. The Cytoplasmic portion of the chain corresponds to 94–118; sequence RGATSSAGVTPLYQYATFICDQMST. The chain crosses the membrane as a helical span at residues 119–139; sequence YFLISAASATATLIDVSGVCG. Topologically, residues 140–156 are extracellular; it reads SNGSGTNLCSRSTASVT. The N-linked (GlcNAc...) asparagine glycan is linked to N141. A helical transmembrane segment spans residues 157–177; it reads FAFLAFLAFSASSVLTGYYLV. The Cytoplasmic portion of the chain corresponds to 178 to 183; sequence KCILKA.

The protein belongs to the Casparian strip membrane proteins (CASP) family. As to quaternary structure, homodimer and heterodimers.

The protein resides in the cell membrane. The polypeptide is CASP-like protein UU2 (Selaginella moellendorffii (Spikemoss)).